A 211-amino-acid chain; its full sequence is Ribosomal RNA small subunit methyltransferase G (211 aa).

Residues glycine 73, phenylalanine 78, and arginine 141 each contribute to the S-adenosyl-L-methionine site.

This sequence belongs to the methyltransferase superfamily. RNA methyltransferase RsmG family.

It is found in the cytoplasm. The catalysed reaction is guanosine(527) in 16S rRNA + S-adenosyl-L-methionine = N(7)-methylguanosine(527) in 16S rRNA + S-adenosyl-L-homocysteine. In terms of biological role, specifically methylates the N7 position of guanine in position 527 of 16S rRNA. This Jannaschia sp. (strain CCS1) protein is Ribosomal RNA small subunit methyltransferase G.